The primary structure comprises 465 residues: MKLWGGRFKKGTDELVNDFNSSINIDSRMYKEDIEGSLAHATMLGEQNIISKEASLKITSGLLEILKRMDNNVINVDLTSEDIHSFVESTLTYYIGEYGKMLHTARSRNDQVTLDLKLYLKKALVKLRKDILYLEKVLLEKSKEHISTIMPGYTHMQKAQPITLSHHLLAYAEMFKRDIGRINDAYKRTDSMPLGSGALATSTYPIDRYMVAKDLGFSTITLNSLDSVSDRDYVIETLSALSLIMMHLSRFSEEIILWCTGEFNFVELDDGYSTGSSIMPQKKNPDVAELIRGKTGRVYGDLITLLTVMKGIPLAYNKDMQEDKEALFDALDTVTLSLKTFAGMIKTMKVNKDNMKKSAALGFTNATDLADYLVKKGSYFRDAHGIVGQIVLQCIKDNKMIEDLTLAELKEYSPTFEEDVYEAINLYTCVEERKVIGGPSSESVKFQIKELQEFIHQFKGDEMYD.

This sequence belongs to the lyase 1 family. Argininosuccinate lyase subfamily.

The protein localises to the cytoplasm. The enzyme catalyses 2-(N(omega)-L-arginino)succinate = fumarate + L-arginine. Its pathway is amino-acid biosynthesis; L-arginine biosynthesis; L-arginine from L-ornithine and carbamoyl phosphate: step 3/3. The polypeptide is Argininosuccinate lyase (Clostridium botulinum (strain Eklund 17B / Type B)).